The following is a 102-amino-acid chain: Small ribosomal subunit protein uS10 (102 aa).

It belongs to the universal ribosomal protein uS10 family. Part of the 30S ribosomal subunit.

Involved in the binding of tRNA to the ribosomes. This is Small ribosomal subunit protein uS10 from Mesorhizobium japonicum (strain LMG 29417 / CECT 9101 / MAFF 303099) (Mesorhizobium loti (strain MAFF 303099)).